A 484-amino-acid chain; its full sequence is Bifunctional protein HldE (484 aa).

The tract at residues 1-320 is ribokinase; it reads MDFSSITVLC…AELNAQDADA (320 aa). Position 195–198 (195–198) interacts with ATP; sequence NARE. Aspartate 265 is an active-site residue. A cytidylyltransferase region spans residues 349–484; it reads FTNGCFDIIH…RIRAAGAADR (136 aa).

It in the N-terminal section; belongs to the carbohydrate kinase PfkB family. The protein in the C-terminal section; belongs to the cytidylyltransferase family. Homodimer.

It carries out the reaction D-glycero-beta-D-manno-heptose 7-phosphate + ATP = D-glycero-beta-D-manno-heptose 1,7-bisphosphate + ADP + H(+). The catalysed reaction is D-glycero-beta-D-manno-heptose 1-phosphate + ATP + H(+) = ADP-D-glycero-beta-D-manno-heptose + diphosphate. It participates in nucleotide-sugar biosynthesis; ADP-L-glycero-beta-D-manno-heptose biosynthesis; ADP-L-glycero-beta-D-manno-heptose from D-glycero-beta-D-manno-heptose 7-phosphate: step 1/4. Its pathway is nucleotide-sugar biosynthesis; ADP-L-glycero-beta-D-manno-heptose biosynthesis; ADP-L-glycero-beta-D-manno-heptose from D-glycero-beta-D-manno-heptose 7-phosphate: step 3/4. Catalyzes the phosphorylation of D-glycero-D-manno-heptose 7-phosphate at the C-1 position to selectively form D-glycero-beta-D-manno-heptose-1,7-bisphosphate. In terms of biological role, catalyzes the ADP transfer from ATP to D-glycero-beta-D-manno-heptose 1-phosphate, yielding ADP-D-glycero-beta-D-manno-heptose. This is Bifunctional protein HldE from Gluconacetobacter diazotrophicus (strain ATCC 49037 / DSM 5601 / CCUG 37298 / CIP 103539 / LMG 7603 / PAl5).